The chain runs to 162 residues: UPF0254 protein MTH1148 homolog (162 aa).

It belongs to the UPF0254 family.

The chain is UPF0254 protein MTH1148 homolog from Methanothermobacter thermautotrophicus (strain Winter) (Methanobacterium thermoautotrophicum).